The primary structure comprises 185 residues: Capsid protein (185 aa).

The interval N136–C185 is disordered. Over residues V149–S178 the composition is skewed to basic residues. Phosphoserine; by host occurs at positions 157, 164, and 172. A 1; half-length repeat occupies S157–P163. The tract at residues S157–Q179 is 3 X 8 AA repeats of S-P-R-R-R-[PR]-S-Q. The Bipartite nuclear localization signal motif lies at R160–R177. A run of 2 repeats spans residues S164–P171 and S172–Q179. The interval Q179–C185 is RNA binding.

This sequence belongs to the orthohepadnavirus core antigen family. Homodimerizes, then multimerizes. Interacts with cytosol exposed regions of viral L glycoprotein present in the reticulum-to-Golgi compartment. Interacts with human FLNB. Phosphorylated form interacts with host importin alpha; this interaction depends on the exposure of the NLS, which itself depends upon genome maturation and/or phosphorylation of the capsid protein. Interacts with host NUP153. Post-translationally, phosphorylated by host SRPK1, SRPK2, and maybe protein kinase C or GAPDH. Phosphorylation is critical for pregenomic RNA packaging. Protein kinase C phosphorylation is stimulated by HBx protein and may play a role in transport of the viral genome to the nucleus at the late step during the viral replication cycle.

The protein localises to the virion. Its subcellular location is the host cytoplasm. Functionally, self assembles to form an icosahedral capsid. Most capsids appear to be large particles with an icosahedral symmetry of T=4 and consist of 240 copies of capsid protein, though a fraction forms smaller T=3 particles consisting of 180 capsid proteins. Entering capsids are transported along microtubules to the nucleus. Phosphorylation of the capsid is thought to induce exposure of nuclear localization signal in the C-terminal portion of the capsid protein that allows binding to the nuclear pore complex via the importin (karyopherin-) alpha and beta. Capsids are imported in intact form through the nuclear pore into the nuclear basket, where it probably binds NUP153. Only capsids that contain the mature viral genome can release the viral DNA and capsid protein into the nucleoplasm. Immature capsids get stuck in the basket. Capsids encapsulate the pre-genomic RNA and the P protein. Pre-genomic RNA is reverse-transcribed into DNA while the capsid is still in the cytoplasm. The capsid can then either be directed to the nucleus, providing more genomes for transcription, or bud through the endoplasmic reticulum to provide new virions. In Hepatitis B virus genotype A2 subtype adw2 (strain Rutter 1979) (HBV-A), this protein is Capsid protein.